The sequence spans 433 residues: UDP-N-acetylglucosamine 1-carboxyvinyltransferase (433 aa).

22-23 lines the phosphoenolpyruvate pocket; sequence KN. Arg96 lines the UDP-N-acetyl-alpha-D-glucosamine pocket. Cys120 acts as the Proton donor in catalysis. Cys120 is modified (2-(S-cysteinyl)pyruvic acid O-phosphothioketal). UDP-N-acetyl-alpha-D-glucosamine is bound by residues 125–129, Asp308, and Ile330; that span reads RPIDL.

This sequence belongs to the EPSP synthase family. MurA subfamily.

It localises to the cytoplasm. The enzyme catalyses phosphoenolpyruvate + UDP-N-acetyl-alpha-D-glucosamine = UDP-N-acetyl-3-O-(1-carboxyvinyl)-alpha-D-glucosamine + phosphate. Its pathway is cell wall biogenesis; peptidoglycan biosynthesis. Cell wall formation. Adds enolpyruvyl to UDP-N-acetylglucosamine. This is UDP-N-acetylglucosamine 1-carboxyvinyltransferase from Koribacter versatilis (strain Ellin345).